Consider the following 256-residue polypeptide: Triosephosphate isomerase (256 aa).

10–12 (NWK) is a substrate binding site. His-99 acts as the Electrophile in catalysis. Glu-171 serves as the catalytic Proton acceptor. Substrate contacts are provided by residues Gly-177, Ser-216, and 237 to 238 (GG).

Belongs to the triosephosphate isomerase family. In terms of assembly, homodimer.

The protein localises to the cytoplasm. The enzyme catalyses D-glyceraldehyde 3-phosphate = dihydroxyacetone phosphate. Its pathway is carbohydrate biosynthesis; gluconeogenesis. It participates in carbohydrate degradation; glycolysis; D-glyceraldehyde 3-phosphate from glycerone phosphate: step 1/1. Involved in the gluconeogenesis. Catalyzes stereospecifically the conversion of dihydroxyacetone phosphate (DHAP) to D-glyceraldehyde-3-phosphate (G3P). This chain is Triosephosphate isomerase, found in Colwellia psychrerythraea (strain 34H / ATCC BAA-681) (Vibrio psychroerythus).